The following is a 133-amino-acid chain: Large ribosomal subunit protein uL15 (133 aa).

The tract at residues 1-58 is disordered; that stretch reads MALQNLTPAPGSTHATKRLGRGQGSGNGKTAGKGNKGQRARKGYNEKRGFEGGQQPLQ. The span at 21–35 shows a compositional bias: gly residues; that stretch reads RGQGSGNGKTAGKGN.

The protein belongs to the universal ribosomal protein uL15 family. Part of the 50S ribosomal subunit.

Functionally, binds to the 23S rRNA. The chain is Large ribosomal subunit protein uL15 from Campylobacter curvus (strain 525.92).